Consider the following 347-residue polypeptide: 3-keto-steroid reductase ERG27 (347 aa).

NADP(+) is bound by residues Leu15, Thr38, and Arg44. Residues Ser179 and Tyr202 each act as proton donor in the active site. Tyr202, Lys206, and Ser237 together coordinate NADP(+). Catalysis depends on Lys206, which acts as the Lowers pKa of active site Tyr. The residue at position 345 (Thr345) is a Phosphothreonine.

This sequence belongs to the short-chain dehydrogenases/reductases (SDR) family. ERG27 subfamily. Heterotetramer of ERG25, ERG26, ERG27 and ERG28. ERG28 acts as a scaffold to tether ERG27 and other 4,4-demethylation-related enzymes, forming a demethylation enzyme complex, in the endoplasmic reticulum. Interacts with ERG25 and ERG28. Also interacts with ERG7, but only in lipid particles.

It localises to the endoplasmic reticulum membrane. It is found in the lipid droplet. The enzyme catalyses 3-dehydro-4alpha-methylzymosterol + NADPH + H(+) = 4alpha-methylzymosterol + NADP(+). Its pathway is steroid biosynthesis; zymosterol biosynthesis; zymosterol from lanosterol: step 5/6. In terms of biological role, 3-keto-steroid reductase; part of the third module of ergosterol biosynthesis pathway that includes the late steps of the pathway. ERG27 is a catalytic component of the C-4 demethylation complex that catalyze the reduction of the keto group on the C-3. The third module or late pathway involves the ergosterol synthesis itself through consecutive reactions that mainly occur in the endoplasmic reticulum (ER) membrane. Firstly, the squalene synthase ERG9 catalyzes the condensation of 2 farnesyl pyrophosphate moieties to form squalene, which is the precursor of all steroids. Squalene synthase is crucial for balancing the incorporation of farnesyl diphosphate (FPP) into sterol and nonsterol isoprene synthesis. Secondly, the squalene epoxidase ERG1 catalyzes the stereospecific oxidation of squalene to (S)-2,3-epoxysqualene, which is considered to be a rate-limiting enzyme in steroid biosynthesis. Then, the lanosterol synthase ERG7 catalyzes the cyclization of (S)-2,3 oxidosqualene to lanosterol, a reaction that forms the sterol core. In the next steps, lanosterol is transformed to zymosterol through a complex process involving various demethylation, reduction and desaturation reactions. The lanosterol 14-alpha-demethylase ERG11 (also known as CYP51) catalyzes C14-demethylation of lanosterol to produce 4,4'-dimethyl cholesta-8,14,24-triene-3-beta-ol, which is critical for ergosterol biosynthesis. The C-14 reductase ERG24 reduces the C14=C15 double bond of 4,4-dimethyl-cholesta-8,14,24-trienol to produce 4,4-dimethyl-cholesta-8,24-dienol. 4,4-dimethyl-cholesta-8,24-dienol is substrate of the C-4 demethylation complex ERG25-ERG26-ERG27 in which ERG25 catalyzes the three-step monooxygenation required for the demethylation of 4,4-dimethyl and 4alpha-methylsterols, ERG26 catalyzes the oxidative decarboxylation that results in a reduction of the 3-beta-hydroxy group at the C-3 carbon to an oxo group, and ERG27 is responsible for the reduction of the keto group on the C-3. ERG28 has a role as a scaffold to help anchor ERG25, ERG26 and ERG27 to the endoplasmic reticulum and ERG29 regulates the activity of the iron-containing C4-methylsterol oxidase ERG25. Then, the sterol 24-C-methyltransferase ERG6 catalyzes the methyl transfer from S-adenosyl-methionine to the C-24 of zymosterol to form fecosterol. The C-8 sterol isomerase ERG2 catalyzes the reaction which results in unsaturation at C-7 in the B ring of sterols and thus converts fecosterol to episterol. The sterol-C5-desaturase ERG3 then catalyzes the introduction of a C-5 double bond in the B ring to produce 5-dehydroepisterol. The C-22 sterol desaturase ERG5 further converts 5-dehydroepisterol into ergosta-5,7,22,24(28)-tetraen-3beta-ol by forming the C-22(23) double bond in the sterol side chain. Finally, ergosta-5,7,22,24(28)-tetraen-3beta-ol is substrate of the C-24(28) sterol reductase ERG4 to produce ergosterol. Its function is as follows. Facilitates the association of ERG7 with lipid particles preventing its digestion in the endoplasmic reticulum and the lipid particles. This chain is 3-keto-steroid reductase ERG27, found in Saccharomyces cerevisiae (strain ATCC 204508 / S288c) (Baker's yeast).